The following is a 303-amino-acid chain: Bifunctional protein FolD (303 aa).

NADP(+)-binding positions include 175 to 177 and isoleucine 243; that span reads GVS.

It belongs to the tetrahydrofolate dehydrogenase/cyclohydrolase family. Homodimer.

The enzyme catalyses (6R)-5,10-methylene-5,6,7,8-tetrahydrofolate + NADP(+) = (6R)-5,10-methenyltetrahydrofolate + NADPH. It catalyses the reaction (6R)-5,10-methenyltetrahydrofolate + H2O = (6R)-10-formyltetrahydrofolate + H(+). It participates in one-carbon metabolism; tetrahydrofolate interconversion. Catalyzes the oxidation of 5,10-methylenetetrahydrofolate to 5,10-methenyltetrahydrofolate and then the hydrolysis of 5,10-methenyltetrahydrofolate to 10-formyltetrahydrofolate. The polypeptide is Bifunctional protein FolD (Xanthomonas oryzae pv. oryzae (strain PXO99A)).